We begin with the raw amino-acid sequence, 364 residues long: Serpentine receptor class epsilon-27 (364 aa).

Transmembrane regions (helical) follow at residues 31–51, 64–84, 125–145, 167–187, 195–215, 257–277, and 290–310; these read VIASIELILYSICLYIVVVSL, FIILVAPFFGIWFELIIGKLI, LLIIAGFMEYHYMFSVVFGAV, IFIPIALTVFFQIIAITCSCL, IITINGTWIVSCACSSIVFFL, LIFSELGTISIIGLIIATLLL, and NALFLNPFGICTVAMYSIPAW.

It belongs to the nematode receptor-like protein sre family.

The protein localises to the membrane. The polypeptide is Serpentine receptor class epsilon-27 (sre-27) (Caenorhabditis elegans).